Reading from the N-terminus, the 184-residue chain is Photosystem I assembly protein Ycf4 (184 aa).

A run of 2 helical transmembrane segments spans residues 22–42 and 57–77; these read FCWA…GTSS and IIFF…LFIS.

This sequence belongs to the Ycf4 family.

The protein localises to the plastid. It localises to the chloroplast thylakoid membrane. Seems to be required for the assembly of the photosystem I complex. In Olimarabidopsis pumila (Dwarf rocket), this protein is Photosystem I assembly protein Ycf4.